The primary structure comprises 212 residues: Nuclear transcription factor Y subunit C-7 (212 aa).

Polar residues predominate over residues 1 to 10 (MEENNGNNNH). Disordered regions lie at residues 1-23 (MEENNGNNNHYLPQPSSSQLPPP) and 190-212 (EWPAVPGDGEEAAGEIGGSSGGN).

It belongs to the NFYC/HAP5 subunit family. In terms of assembly, heterotrimeric transcription factor composed of three components, NF-YA, NF-YB and NF-YC. NF-YB and NF-YC must interact and dimerize for NF-YA association and DNA binding. As to expression, expressed in flowers.

The protein localises to the nucleus. In terms of biological role, stimulates the transcription of various genes by recognizing and binding to a CCAAT motif in promoters. The polypeptide is Nuclear transcription factor Y subunit C-7 (NFYC7) (Arabidopsis thaliana (Mouse-ear cress)).